The following is a 210-amino-acid chain: ATP-dependent Clp protease proteolytic subunit (210 aa).

Catalysis depends on serine 106, which acts as the Nucleophile. Histidine 131 is an active-site residue.

It belongs to the peptidase S14 family. As to quaternary structure, fourteen ClpP subunits assemble into 2 heptameric rings which stack back to back to give a disk-like structure with a central cavity, resembling the structure of eukaryotic proteasomes.

Its subcellular location is the cytoplasm. The enzyme catalyses Hydrolysis of proteins to small peptides in the presence of ATP and magnesium. alpha-casein is the usual test substrate. In the absence of ATP, only oligopeptides shorter than five residues are hydrolyzed (such as succinyl-Leu-Tyr-|-NHMec, and Leu-Tyr-Leu-|-Tyr-Trp, in which cleavage of the -Tyr-|-Leu- and -Tyr-|-Trp bonds also occurs).. Cleaves peptides in various proteins in a process that requires ATP hydrolysis. Has a chymotrypsin-like activity. Plays a major role in the degradation of misfolded proteins. In Bartonella henselae (strain ATCC 49882 / DSM 28221 / CCUG 30454 / Houston 1) (Rochalimaea henselae), this protein is ATP-dependent Clp protease proteolytic subunit.